A 719-amino-acid chain; its full sequence is Polyribonucleotide nucleotidyltransferase (719 aa).

Positions 490 and 496 each coordinate Mg(2+). The region spanning 557-619 (PKIEIIIIPK…KSIDAALTRI (63 aa)) is the KH domain. Positions 629–699 (GEIYEGKIRS…KTGKFKLSHK (71 aa)) constitute an S1 motif domain.

It belongs to the polyribonucleotide nucleotidyltransferase family. Mg(2+) is required as a cofactor.

It is found in the cytoplasm. The enzyme catalyses RNA(n+1) + phosphate = RNA(n) + a ribonucleoside 5'-diphosphate. In terms of biological role, involved in mRNA degradation. Catalyzes the phosphorolysis of single-stranded polyribonucleotides processively in the 3'- to 5'-direction. The sequence is that of Polyribonucleotide nucleotidyltransferase from Azobacteroides pseudotrichonymphae genomovar. CFP2.